Here is a 677-residue protein sequence, read N- to C-terminus: DNA ligase (677 aa).

NAD(+)-binding positions include 35-39 (DAEFD), 85-86 (SL), and Glu-110. Lys-112 serves as the catalytic N6-AMP-lysine intermediate. NAD(+) contacts are provided by Arg-133 and Glu-173. Residues 189 to 210 (QKEGGKPFANPRNAAAGSLRQK) are disordered. Positions 289 and 313 each coordinate NAD(+). Zn(2+) contacts are provided by Cys-407, Cys-410, Cys-426, and Cys-432. The 82-residue stretch at 596–677 (IPDQVLEGLT…FKQLLANGTV (82 aa)) folds into the BRCT domain.

The protein belongs to the NAD-dependent DNA ligase family. LigA subfamily. Mg(2+) serves as cofactor. It depends on Mn(2+) as a cofactor.

The catalysed reaction is NAD(+) + (deoxyribonucleotide)n-3'-hydroxyl + 5'-phospho-(deoxyribonucleotide)m = (deoxyribonucleotide)n+m + AMP + beta-nicotinamide D-nucleotide.. DNA ligase that catalyzes the formation of phosphodiester linkages between 5'-phosphoryl and 3'-hydroxyl groups in double-stranded DNA using NAD as a coenzyme and as the energy source for the reaction. It is essential for DNA replication and repair of damaged DNA. In Corynebacterium diphtheriae (strain ATCC 700971 / NCTC 13129 / Biotype gravis), this protein is DNA ligase.